The chain runs to 209 residues: Large ribosomal subunit protein uL3 (209 aa).

Residues 144–165 (GSMGAASDPSRTFKNKKMPGHM) form a disordered region.

It belongs to the universal ribosomal protein uL3 family. In terms of assembly, part of the 50S ribosomal subunit. Forms a cluster with proteins L14 and L19.

In terms of biological role, one of the primary rRNA binding proteins, it binds directly near the 3'-end of the 23S rRNA, where it nucleates assembly of the 50S subunit. The polypeptide is Large ribosomal subunit protein uL3 (Clostridium novyi (strain NT)).